Reading from the N-terminus, the 740-residue chain is D-ornithine 4,5-aminomutase subunit beta (740 aa).

Residues glutamate 81, tyrosine 160, histidine 182, and 294–296 (RAQ) contribute to the substrate site. Positions 602–739 (PLKIVAATVG…VKKRREMREG (138 aa)) constitute a B12-binding domain. Adenosylcob(III)alamin is bound by residues 614–616 (EHS) and histidine 615. Lysine 626 is modified (N6-(pyridoxal phosphate)lysine). Residues 664-669 (STIISH), threonine 700, and serine 720 contribute to the adenosylcob(III)alamin site.

In terms of assembly, heterotetramer of 2 alpha (OraS) and 2 beta (OraE) subunits. Requires adenosylcob(III)alamin as cofactor. It depends on pyridoxal 5'-phosphate as a cofactor.

The enzyme catalyses D-ornithine = (2R,4S)-2,4-diaminopentanoate. Increased activity in the presence of dithiothreitol (DTT) in vitro. Inhibited by 1 mM potassium phosphate and potassium chloride. Inhibited by L-alpha-ornithine, D,L-alpha-lysine, L-beta-lysine (50%-60%), L-alpha-lysine (26%) and by delta-amino-n-valeric acid to a lesser extent. Significant decrease in activity is observed in the presence of 0.2 mM p-chloromercuribenzoate, N-ethylmaleimide and also by 2 mM iodoacetate to a lesser extent but not inhibited by arsenite. Its function is as follows. Component of a complex that catalyzes the reversible migration of the omega amino group of D-ornithine to C-4 to form (2R,4S)-2,4-diaminopentanoic acid. OraE may be the catalytic subunit. Active only on D-ornithine and 2,4-diaminopentanoic acid but not active on L-ornithine, L-beta-lysine, L-alpha-lysine or D-alpha-lysine. The polypeptide is D-ornithine 4,5-aminomutase subunit beta (oraE) (Acetoanaerobium sticklandii (strain ATCC 12662 / DSM 519 / JCM 1433 / CCUG 9281 / NCIMB 10654 / HF) (Clostridium sticklandii)).